Reading from the N-terminus, the 625-residue chain is tRNA uridine 5-carboxymethylaminomethyl modification enzyme MnmG (625 aa).

Residues 13 to 18 (GGGHAG), Val-125, and Ser-182 each bind FAD. Position 276–290 (276–290 (GPRYCPSIEDKITRF)) interacts with NAD(+). Gln-373 lines the FAD pocket.

Belongs to the MnmG family. As to quaternary structure, homodimer. Heterotetramer of two MnmE and two MnmG subunits. It depends on FAD as a cofactor.

It is found in the cytoplasm. Its function is as follows. NAD-binding protein involved in the addition of a carboxymethylaminomethyl (cmnm) group at the wobble position (U34) of certain tRNAs, forming tRNA-cmnm(5)s(2)U34. This is tRNA uridine 5-carboxymethylaminomethyl modification enzyme MnmG from Lactococcus lactis subsp. cremoris (strain SK11).